A 423-amino-acid chain; its full sequence is D-tagatose-1,6-bisphosphate aldolase subunit GatZ (423 aa).

It belongs to the GatZ/KbaZ family. GatZ subfamily. Forms a complex with GatY.

It functions in the pathway carbohydrate metabolism; D-tagatose 6-phosphate degradation; D-glyceraldehyde 3-phosphate and glycerone phosphate from D-tagatose 6-phosphate: step 2/2. In terms of biological role, component of the tagatose-1,6-bisphosphate aldolase GatYZ that is required for full activity and stability of the Y subunit. Could have a chaperone-like function for the proper and stable folding of GatY. When expressed alone, GatZ does not show any aldolase activity. Is involved in the catabolism of galactitol. The chain is D-tagatose-1,6-bisphosphate aldolase subunit GatZ from Salmonella newport (strain SL254).